The chain runs to 430 residues: Divergent protein kinase domain 2A (430 aa).

The first 35 residues, 1–35, serve as a signal peptide directing secretion; it reads MWRLVPLKLGRLSRALKLAALGSLLVLMLLHSPSL.

The protein belongs to the DIPK family. As to expression, expressed in heart, brain, liver, spleen, kidney, lung, thymus, testis, ovary and muscle.

The protein resides in the golgi apparatus. It localises to the cytoplasmic vesicle. The protein localises to the COPI-coated vesicle. It is found in the secreted. In terms of biological role, may play a role in cardiomyocyte proliferation through paracrine signaling and activation of the PI3-kinase signaling cascade. The chain is Divergent protein kinase domain 2A (Dipk2a) from Mus musculus (Mouse).